Consider the following 96-residue polypeptide: Small ribosomal subunit protein uS17 (96 aa).

Belongs to the universal ribosomal protein uS17 family. As to quaternary structure, part of the 30S ribosomal subunit.

Functionally, one of the primary rRNA binding proteins, it binds specifically to the 5'-end of 16S ribosomal RNA. The polypeptide is Small ribosomal subunit protein uS17 (Deinococcus radiodurans (strain ATCC 13939 / DSM 20539 / JCM 16871 / CCUG 27074 / LMG 4051 / NBRC 15346 / NCIMB 9279 / VKM B-1422 / R1)).